The following is a 378-amino-acid chain: Secreted LysM effector ldpA (378 aa).

An N-terminal signal peptide occupies residues 1–19 (MMKSIRFLASALALCLVDA). Residues 118 to 131 (WTPPTTTTRSTSSS) show a composition bias toward low complexity. Positions 118–139 (WTPPTTTTRSTSSSAGNGVTTP) are disordered. One can recognise a LysM 1 domain in the interval 152 to 198 (RFYLVVSGDSCYDIAAAQGISLDNFYTWNPAVGSSCGGLWPDYYVCV). Residues 208–230 (TTTTTTTPTTTSTTTTTAGNGVT) are disordered. 2 LysM domains span residues 245 to 291 (KFYQ…YVCV) and 330 to 376 (KFYL…YVCV).

Belongs to the secreted LysM effector family.

Its subcellular location is the secreted. The protein resides in the cell wall. The protein localises to the extracellular space. It localises to the extracellular matrix. Cell wall chitin of A.fumigatus recruits lung eosinophils during infection and ldpA might have a role in sequestration of chitin and act as triggers of host immunity to dampen host defense. This is Secreted LysM effector ldpA from Aspergillus fumigatus (strain ATCC MYA-4609 / CBS 101355 / FGSC A1100 / Af293) (Neosartorya fumigata).